Reading from the N-terminus, the 358-residue chain is Zinc-type alcohol dehydrogenase-like protein YogA (358 aa).

Belongs to the zinc-containing alcohol dehydrogenase family. Quinone oxidoreductase subfamily.

It functions in the pathway secondary metabolite biosynthesis. Its function is as follows. Zinc-type alcohol dehydrogenase-like protein; part of the gene cluster that mediates the biosynthesis of phomenoic acid, a long chain aliphatic carboxylic acid that does not appear to be essential for pathogenicity but may play a role in allowing to outcompete other fungi in the environmental niche via its antifungal properties. The polyketide synthase produces the long methylated aliphatic carboxylic acid chain of phomenoic acid. The cluster-specific cytochrome P450 monooxygenase may then hydroxylate the methyl group of carbon 31. The putative dehydrogenase YogA, which has no obvious role in phomenoic acid biosynthesis, may further modify phomenoic acid to produce a compound not identified yet. The sequence is that of Zinc-type alcohol dehydrogenase-like protein YogA from Leptosphaeria maculans (strain JN3 / isolate v23.1.3 / race Av1-4-5-6-7-8) (Blackleg fungus).